The sequence spans 42 residues: Photosystem II reaction center protein J (42 aa).

The chain crosses the membrane as a helical span at residues 10–30 (IPLWLIATVAGILVLTVVGIF).

It belongs to the PsbJ family. As to quaternary structure, PSII is composed of 1 copy each of membrane proteins PsbA, PsbB, PsbC, PsbD, PsbE, PsbF, PsbH, PsbI, PsbJ, PsbK, PsbL, PsbM, PsbT, PsbX, PsbY, PsbZ, Psb30/Ycf12, at least 3 peripheral proteins of the oxygen-evolving complex and a large number of cofactors. It forms dimeric complexes.

It is found in the plastid. The protein localises to the chloroplast thylakoid membrane. Its function is as follows. One of the components of the core complex of photosystem II (PSII). PSII is a light-driven water:plastoquinone oxidoreductase that uses light energy to abstract electrons from H(2)O, generating O(2) and a proton gradient subsequently used for ATP formation. It consists of a core antenna complex that captures photons, and an electron transfer chain that converts photonic excitation into a charge separation. In Chara vulgaris (Common stonewort), this protein is Photosystem II reaction center protein J.